The sequence spans 200 residues: Small ribosomal subunit protein uS4 (200 aa).

Residues 92-155 (SRLDAVVYSL…QNLDIIKESV (64 aa)) enclose the S4 RNA-binding domain.

It belongs to the universal ribosomal protein uS4 family. Part of the 30S ribosomal subunit. Contacts protein S5. The interaction surface between S4 and S5 is involved in control of translational fidelity.

Functionally, one of the primary rRNA binding proteins, it binds directly to 16S rRNA where it nucleates assembly of the body of the 30S subunit. Its function is as follows. With S5 and S12 plays an important role in translational accuracy. The polypeptide is Small ribosomal subunit protein uS4 (Staphylococcus haemolyticus (strain JCSC1435)).